The sequence spans 463 residues: tRNA-splicing endonuclease subunit Sen2 (463 aa).

Phosphoserine is present on residues Ser32 and Ser147. The segment at 120–213 (HDESTVQKIL…VASPSSLNGH (94 aa)) is disordered. Basic and acidic residues-rich tracts occupy residues 139–149 (PYRERKGESPQ) and 159–170 (SSLEGREGKDEL). Catalysis depends on residues Tyr367 and His375. 3 positions are modified to phosphoserine: Ser406, Ser409, and Ser413. Lys414 is a catalytic residue.

This sequence belongs to the tRNA-intron endonuclease family. In terms of assembly, tRNA splicing endonuclease is a heterotetramer composed of TSEN2, TSEN15, TSEN34/LENG5 and TSEN54. tRNA splicing endonuclease complex also contains proteins of the pre-mRNA 3'-end processing machinery such as CLP1, CPSF1, CPSF4 and CSTF2.

The protein resides in the nucleus. It localises to the nucleolus. The enzyme catalyses pretRNA = a 3'-half-tRNA molecule with a 5'-OH end + a 5'-half-tRNA molecule with a 2',3'-cyclic phosphate end + an intron with a 2',3'-cyclic phosphate and a 5'-hydroxyl terminus.. Functionally, constitutes one of the two catalytic subunit of the tRNA-splicing endonuclease complex, a complex responsible for identification and cleavage of the splice sites in pre-tRNA. It cleaves pre-tRNA at the 5'- and 3'-splice sites to release the intron. The products are an intron and two tRNA half-molecules bearing 2',3'-cyclic phosphate and 5'-OH termini. There are no conserved sequences at the splice sites, but the intron is invariably located at the same site in the gene, placing the splice sites an invariant distance from the constant structural features of the tRNA body. Probably carries the active site for 5'-splice site cleavage. The tRNA splicing endonuclease is also involved in mRNA processing via its association with pre-mRNA 3'-end processing factors, establishing a link between pre-tRNA splicing and pre-mRNA 3'-end formation, suggesting that the endonuclease subunits function in multiple RNA-processing events. This Rattus norvegicus (Rat) protein is tRNA-splicing endonuclease subunit Sen2 (Tsen2).